The primary structure comprises 101 residues: NADH-quinone oxidoreductase subunit K (101 aa).

Helical transmembrane passes span 5 to 25 (PNWY…GVLF), 30 to 50 (IVVL…LVTF), and 62 to 82 (LVFF…AIVI).

Belongs to the complex I subunit 4L family. In terms of assembly, NDH-1 is composed of 14 different subunits. Subunits NuoA, H, J, K, L, M, N constitute the membrane sector of the complex.

It is found in the cell inner membrane. The enzyme catalyses a quinone + NADH + 5 H(+)(in) = a quinol + NAD(+) + 4 H(+)(out). Its function is as follows. NDH-1 shuttles electrons from NADH, via FMN and iron-sulfur (Fe-S) centers, to quinones in the respiratory chain. The immediate electron acceptor for the enzyme in this species is believed to be a menaquinone. Couples the redox reaction to proton translocation (for every two electrons transferred, four hydrogen ions are translocated across the cytoplasmic membrane), and thus conserves the redox energy in a proton gradient. In Salinibacter ruber (strain DSM 13855 / M31), this protein is NADH-quinone oxidoreductase subunit K.